A 1059-amino-acid polypeptide reads, in one-letter code: Microtubule-associated protein 1S (1059 aa).

The necessary for the microtubule-organizing center localization stretch occupies residues methionine 1–serine 797. Phosphoserine occurs at positions 321 and 472. Disordered stretches follow at residues proline 461–histidine 733 and valine 751–proline 942. Basic and acidic residues-rich tracts occupy residues glycine 466–glycine 486 and proline 494–lysine 530. Over residues serine 547–glutamine 557 the composition is skewed to polar residues. Serine 582 carries the phosphoserine modification. Over residues alanine 591–serine 603 the composition is skewed to low complexity. Threonine 638 bears the Phosphothreonine mark. At serine 640 the chain carries Phosphoserine. Basic and acidic residues predominate over residues glutamate 642–glutamate 652. 2 positions are modified to phosphoserine: serine 655 and serine 657. Residues proline 666–phenylalanine 1059 form a necessary for interaction with RASSF1 isoform A and isoform C region. Residues proline 670 to proline 680 show a composition bias toward low complexity. The segment at glutamate 714 to glutamate 966 is necessary for association with microtubules. A phosphoserine mark is found at serine 731 and serine 759. Residues serine 759 to arginine 769 are compositionally biased toward low complexity. Residues proline 783–aspartate 796 are compositionally biased toward polar residues. Residue serine 809 is modified to Phosphoserine. The segment covering proline 825–aspartate 836 has biased composition (pro residues). Low complexity-rich tracts occupy residues alanine 873–lysine 887 and threonine 923–proline 936. The necessary for association with actin stretch occupies residues alanine 960 to phenylalanine 1059. Residues phenylalanine 967–alanine 991 form a necessary for the mitochondrial aggregation and genome destruction region.

This sequence belongs to the MAP1 family. Heterodimer of a heavy and a light chain. Interacts with microtubules and actin. Both MAP1S heavy and light chains interact with microtubules. MAP1S light chain interacts with actin. Interacts (via C-terminus) with GAN (via Kelch domains). Interacts with ESR1, LRPPRC, RASSF1 isoform A and isoform C, microtubules and VCY2. Interacts with WDR47 (via N-terminus of light chain). As to expression, expressed in neurons (at protein level). Expressed in spermatocytes, spermatids and spermatozoa. Expressed in the cerebral cortex. Highly expressed in testis. Moderately expressed in the brain, colon, heart, kidney, liver, lung, placenta, small intestine, spleen and stomach. Weakly expressed in muscle.

The protein localises to the nucleus. Its subcellular location is the cytoplasm. The protein resides in the cytosol. It is found in the cytoskeleton. It localises to the spindle. In terms of biological role, microtubule-associated protein that mediates aggregation of mitochondria resulting in cell death and genomic destruction (MAGD). Plays a role in anchoring the microtubule organizing center to the centrosomes. Binds to DNA. Plays a role in apoptosis. Involved in the formation of microtubule bundles. The polypeptide is Microtubule-associated protein 1S (MAP1S) (Homo sapiens (Human)).